The following is a 2383-amino-acid chain: Highly reducing polyketide synthase SAT13 (2383 aa).

The Ketosynthase family 3 (KS3) domain occupies proline 6–arginine 433. Residues cysteine 180, histidine 315, and histidine 355 each act as for beta-ketoacyl synthase activity in the active site. The segment at phenylalanine 536 to proline 828 is malonyl-CoA:ACP transacylase (MAT) domain. Serine 626 acts as the For malonyltransferase activity in catalysis. The tract at residues histidine 922–serine 1062 is N-terminal hotdog fold. The tract at residues histidine 922–arginine 1239 is dehydratase (DH) domain. The 321-residue stretch at histidine 922–asparagine 1242 folds into the PKS/mFAS DH domain. The Proton acceptor; for dehydratase activity role is filled by histidine 954. The tract at residues glycine 1087–asparagine 1242 is C-terminal hotdog fold. The active-site Proton donor; for dehydratase activity is the aspartate 1152. Residues aspartate 1669 to leucine 1977 are enoylreductase (ER) domain. Residues alanine 2001–aspartate 2184 form a catalytic ketoreductase (KRc) domain region. Positions glutamate 2287 to serine 2364 constitute a Carrier domain. Serine 2324 is subject to O-(pantetheine 4'-phosphoryl)serine.

Its pathway is mycotoxin biosynthesis. In terms of biological role, highly reducing polyketide synthase; part of the satratoxin SC2 cluster involved in the biosynthesis of satratoxins, trichothecene mycotoxins that are associated with human food poisonings. Satratoxins are suggested to be made by products of multiple gene clusters (SC1, SC2 and SC3) that encode 21 proteins in all, including polyketide synthases, acetyltransferases, and other enzymes expected to modify the trichothecene skeleton. SC1 encodes 10 proteins, SAT1 to SAT10. The largest are SAT8, which encodes a putative polyketide synthase (PKS) with a conventional non-reducing architecture, and SAT10, a putative protein containing four ankyrin repeats and thus may be involved in protein scaffolding. The putative short-chain reductase SAT3 may assist the PKS in some capacity. SAT6 contains a secretory lipase domain and acts probably as a trichothecene esterase. SAT5 encodes a putative acetyltransferase, and so, with SAT6, may affect endogenous protection from toxicity. The probable transcription factor SAT9 may regulate the expression of the SC1 cluster. SC2 encodes proteins SAT11 to SAT16, the largest of which encodes the putative reducing PKS SAT13. SAT11 is a cytochrome P450 monooxygenase, while SAT14 and SAT16 are probable acetyltransferases. The SC2 cluster may be regulated by the transcription factor SAT15. SC3 is a small cluster that encodes 5 proteins, SAT17 to SAT21. SAT21 is a putative MFS-type transporter which may have a role in exporting secondary metabolites. The four other proteins putatively encoded in SC3 include the taurine hydroxylase-like protein SAT17, the O-methyltransferase SAT18, the acetyltransferase SAT19, and the Cys6-type zinc finger SAT20, the latter being probably involved in regulation of SC3 expression. The chain is Highly reducing polyketide synthase SAT13 from Stachybotrys chartarum (strain CBS 109288 / IBT 7711) (Toxic black mold).